Consider the following 115-residue polypeptide: U3-lycotoxin-Ls1v (115 aa).

Residues methionine 1–alanine 20 form the signal peptide. Residues glutamate 21–arginine 44 constitute a propeptide that is removed on maturation. Disulfide bonds link cysteine 48–cysteine 63, cysteine 55–cysteine 72, cysteine 62–cysteine 87, and cysteine 74–cysteine 85.

It belongs to the neurotoxin 19 (CSTX) family. 01 subfamily. As to expression, expressed by the venom gland.

The protein resides in the secreted. The polypeptide is U3-lycotoxin-Ls1v (Lycosa singoriensis (Wolf spider)).